The chain runs to 315 residues: Phosphatidylglycerol--prolipoprotein diacylglyceryl transferase (315 aa).

2 helical membrane-spanning segments follow: residues 19 to 39 (FTIH…VWIL) and 93 to 113 (VWEG…VAFL). Arginine 141 is an a 1,2-diacyl-sn-glycero-3-phospho-(1'-sn-glycerol) binding site. 2 helical membrane passes run 188-208 (LFHP…ALII) and 256-276 (VWTA…LYQY).

It belongs to the Lgt family.

It is found in the cell membrane. It carries out the reaction L-cysteinyl-[prolipoprotein] + a 1,2-diacyl-sn-glycero-3-phospho-(1'-sn-glycerol) = an S-1,2-diacyl-sn-glyceryl-L-cysteinyl-[prolipoprotein] + sn-glycerol 1-phosphate + H(+). It functions in the pathway protein modification; lipoprotein biosynthesis (diacylglyceryl transfer). Catalyzes the transfer of the diacylglyceryl group from phosphatidylglycerol to the sulfhydryl group of the N-terminal cysteine of a prolipoprotein, the first step in the formation of mature lipoproteins. The protein is Phosphatidylglycerol--prolipoprotein diacylglyceryl transferase of Bifidobacterium longum (strain NCC 2705).